An 874-amino-acid chain; its full sequence is MYQTTAALRSAFLEYFRTNGHQVVDSSSLVPVNDPTLLFTNAGMNQFKDVFLGEDKRSYTRATSSQRCVRAGGKHNDLDNVGYTARHHTFFEMLGNFSFGDYFKRDAISFAWNFLTQELKLPKERLCVTIYETDDEAYDIWTKEIGVPAENLIRIGDNKGAPYASDNFWQMGDTGPCGPCSEIFYDHGDHIWGGRPGTPEEDGDRFIEIWNIVFMQYNRQSDGEMLPLPKPSVDTGMGIERIAAIMQGVHSNYEIDIFQALIKKTAEILSVTDLENKSLRVISDHIRSCAFLIADGVMPSNEGRGYVLRRIIRRAVRHGNKLGASDSFFYKLVPTLIEVMGDAAKGLVATQAIVEKSLKAEEEQFARTLERGLGILDGALNALKGDVLDGETAFKLYDTYGFPVDLTADVCREREITVDEAGFEVAMAEQRSRAQAAGQFETDYNDSLKIDELTHFSGYTELTAPGKITAIYMAGESVNSLSAGDEAVIVLDSTPFYGESGGQCGDRGVLSAKGIEFDVKDTQKYGQAVGHQGALTSGTLSVGDSLEANVDKKLRHRTELNHSVTHLLHAALRQLLGTHVTQKGSLVDSERLRFDFSHFEGVKPEELKAVEDLVNTQIRRNHKLSAEVMDMDQAKEKGAMALFGEKYTDEVRVVTMGDFSIELCGGTHVGRTGDIGLFKITSEGGIAAGVRRIEAVTGAAAMAYVAGQKAELDQAAALLKADSASVVSKLKAQLDRTKLLEKELSQLKDKLAAATSADLAGEAQQVNGVNVLVKKLDGVEAGALRGLQDELKQKLGSGIVVLGIAGDAKVNLIVGVTKDLTSKVKAGELVASIASQVGGKGGGRPDMAQAGGSQPENLDSALEQVIPWLTERLA.

Zn(2+)-binding residues include His562, His566, Cys664, and His668.

Belongs to the class-II aminoacyl-tRNA synthetase family. Zn(2+) serves as cofactor.

It localises to the cytoplasm. It carries out the reaction tRNA(Ala) + L-alanine + ATP = L-alanyl-tRNA(Ala) + AMP + diphosphate. In terms of biological role, catalyzes the attachment of alanine to tRNA(Ala) in a two-step reaction: alanine is first activated by ATP to form Ala-AMP and then transferred to the acceptor end of tRNA(Ala). Also edits incorrectly charged Ser-tRNA(Ala) and Gly-tRNA(Ala) via its editing domain. The sequence is that of Alanine--tRNA ligase from Shewanella sediminis (strain HAW-EB3).